Reading from the N-terminus, the 64-residue chain is Large ribosomal subunit protein bL35 (64 aa).

Composition is skewed to basic residues over residues 1–15 and 23–33; these read MPKA…KRFR and VRQKANRRHLL. Residues 1-47 are disordered; that stretch reads MPKAKTHSGASKRFRTTGSGKIVRQKANRRHLLEHKPTSRTRRLDGR. The span at 34 to 46 shows a compositional bias: basic and acidic residues; it reads EHKPTSRTRRLDG.

It belongs to the bacterial ribosomal protein bL35 family.

The protein is Large ribosomal subunit protein bL35 of Mycobacteroides abscessus (strain ATCC 19977 / DSM 44196 / CCUG 20993 / CIP 104536 / JCM 13569 / NCTC 13031 / TMC 1543 / L948) (Mycobacterium abscessus).